The sequence spans 203 residues: Imidazole glycerol phosphate synthase subunit HisH (203 aa).

The Glutamine amidotransferase type-1 domain maps to 1–203; the sequence is MIGIIDYGMG…KNFGEMIKCL (203 aa). C79 serves as the catalytic Nucleophile. Catalysis depends on residues H181 and E183.

In terms of assembly, heterodimer of HisH and HisF.

Its subcellular location is the cytoplasm. It catalyses the reaction 5-[(5-phospho-1-deoxy-D-ribulos-1-ylimino)methylamino]-1-(5-phospho-beta-D-ribosyl)imidazole-4-carboxamide + L-glutamine = D-erythro-1-(imidazol-4-yl)glycerol 3-phosphate + 5-amino-1-(5-phospho-beta-D-ribosyl)imidazole-4-carboxamide + L-glutamate + H(+). The enzyme catalyses L-glutamine + H2O = L-glutamate + NH4(+). It functions in the pathway amino-acid biosynthesis; L-histidine biosynthesis; L-histidine from 5-phospho-alpha-D-ribose 1-diphosphate: step 5/9. Its function is as follows. IGPS catalyzes the conversion of PRFAR and glutamine to IGP, AICAR and glutamate. The HisH subunit catalyzes the hydrolysis of glutamine to glutamate and ammonia as part of the synthesis of IGP and AICAR. The resulting ammonia molecule is channeled to the active site of HisF. In Caldanaerobacter subterraneus subsp. tengcongensis (strain DSM 15242 / JCM 11007 / NBRC 100824 / MB4) (Thermoanaerobacter tengcongensis), this protein is Imidazole glycerol phosphate synthase subunit HisH.